The primary structure comprises 130 residues: Histone H2B.2 (130 aa).

A compositionally biased stretch (basic and acidic residues) spans 1–19; it reads MAPKAEKKPASKAPAEKKP. The segment at 1 to 38 is disordered; it reads MAPKAEKKPASKAPAEKKPAAKKTASTDGAKKRTKARK. 2 positions are modified to N6-acetyllysine; alternate: Lys7 and Lys8. Glycyl lysine isopeptide (Lys-Gly) (interchain with G-Cter in SUMO); alternate cross-links involve residues Lys7 and Lys8. Residue Ser11 is modified to Phosphoserine. The residue at position 12 (Lys12) is an N6-acetyllysine. The residue at position 17 (Lys17) is an N6-acetyllysine; alternate. A Glycyl lysine isopeptide (Lys-Gly) (interchain with G-Cter in SUMO); alternate cross-link involves residue Lys17. Residue Lys18 forms a Glycyl lysine isopeptide (Lys-Gly) (interchain with G-Cter in SUMO) linkage. Lys124 is covalently cross-linked (Glycyl lysine isopeptide (Lys-Gly) (interchain with G-Cter in ubiquitin)).

The protein belongs to the histone H2B family. As to quaternary structure, the nucleosome is a histone octamer containing two molecules each of H2A, H2B, H3 and H4 assembled in one H3-H4 heterotetramer and two H2A-H2B heterodimers. The octamer wraps approximately 147 bp of DNA. Post-translationally, monoubiquitinated by the UBC2-BRE1 complex to form H2BK123ub1. H2BK123ub1 gives a specific tag for epigenetic transcriptional activation and is also prerequisite for H3K4me and H3K79me formation. H2BK123ub1 also modulates the formation of double-strand breaks during meiosis and is a prerequisite for DNA-damage checkpoint activation. Phosphorylated by STE20 to form H2BS10ph during progression through meiotic prophase. May be correlated with chromosome condensation. In terms of processing, acetylated by GCN5 to form H2BK11ac and H2BK16ac. H2BK16ac can also be formed by ESA1. Acetylation of N-terminal lysines and particularly formation of H2BK11acK16ac has a positive effect on transcription. Post-translationally, sumoylation to form H2BK6su or H2BK7su, and probably also H2BK16su or H2BK17su, occurs preferentially near the telomeres and represses gene transcription.

Its subcellular location is the nucleus. It localises to the chromosome. Core component of nucleosome. Nucleosomes wrap and compact DNA into chromatin, limiting DNA accessibility to the cellular machineries which require DNA as a template. Histones thereby play a central role in transcription regulation, DNA repair, DNA replication and chromosomal stability. DNA accessibility is regulated via a complex set of post-translational modifications of histones, also called histone code, and nucleosome remodeling. In Candida albicans (strain SC5314 / ATCC MYA-2876) (Yeast), this protein is Histone H2B.2 (HTB2).